A 432-amino-acid chain; its full sequence is Enolase (432 aa).

(2R)-2-phosphoglycerate is bound at residue Gln-167. The active-site Proton donor is the Glu-209. Asp-246, Glu-291, and Asp-318 together coordinate Mg(2+). Positions 343, 372, 373, and 394 each coordinate (2R)-2-phosphoglycerate. Lys-343 (proton acceptor) is an active-site residue.

Belongs to the enolase family. Component of the RNA degradosome, a multiprotein complex involved in RNA processing and mRNA degradation. Requires Mg(2+) as cofactor.

It is found in the cytoplasm. The protein localises to the secreted. Its subcellular location is the cell surface. It catalyses the reaction (2R)-2-phosphoglycerate = phosphoenolpyruvate + H2O. The protein operates within carbohydrate degradation; glycolysis; pyruvate from D-glyceraldehyde 3-phosphate: step 4/5. Its function is as follows. Catalyzes the reversible conversion of 2-phosphoglycerate (2-PG) into phosphoenolpyruvate (PEP). It is essential for the degradation of carbohydrates via glycolysis. The protein is Enolase of Aliivibrio fischeri (strain MJ11) (Vibrio fischeri).